A 125-amino-acid chain; its full sequence is Thioredoxin H-type (125 aa).

Residues 2–112 (AEGNVFACHS…LERKVAALAA (111 aa)) form the Thioredoxin domain. Active-site nucleophile residues include cysteine 38 and cysteine 41. Cysteine 38 and cysteine 41 are joined by a disulfide.

Belongs to the thioredoxin family. Plant H-type subfamily.

It localises to the cytoplasm. Its function is as follows. Participates in various redox reactions through the reversible oxidation of the active center dithiol to a disulfide. The H form is known to activate a number of cytosolic enzymes. This chain is Thioredoxin H-type (SB09), found in Picea mariana (Black spruce).